Here is a 246-residue protein sequence, read N- to C-terminus: Carboxy-S-adenosyl-L-methionine synthase (246 aa).

S-adenosyl-L-methionine-binding positions include Tyr39, 64–66 (GCS), 89–90 (DN), 121–122 (DI), Asn136, and Arg203.

This sequence belongs to the class I-like SAM-binding methyltransferase superfamily. Cx-SAM synthase family. In terms of assembly, homodimer.

The catalysed reaction is prephenate + S-adenosyl-L-methionine = carboxy-S-adenosyl-L-methionine + 3-phenylpyruvate + H2O. In terms of biological role, catalyzes the conversion of S-adenosyl-L-methionine (SAM) to carboxy-S-adenosyl-L-methionine (Cx-SAM). This is Carboxy-S-adenosyl-L-methionine synthase from Pseudomonas aeruginosa (strain UCBPP-PA14).